Reading from the N-terminus, the 318-residue chain is Electron transfer flavoprotein subunit alpha (318 aa).

257–285 contacts FAD; sequence LYIALGISGAIQHRAGMQTSKTIVAVNKD.

The protein belongs to the ETF alpha-subunit/FixB family. As to quaternary structure, heterodimer of an alpha and a beta subunit. Requires FAD as cofactor.

Its function is as follows. The electron transfer flavoprotein serves as a specific electron acceptor for other dehydrogenases. It transfers the electrons to the main respiratory chain via ETF-ubiquinone oxidoreductase (ETF dehydrogenase). This is Electron transfer flavoprotein subunit alpha (etfA) from Mycobacterium tuberculosis (strain CDC 1551 / Oshkosh).